A 1873-amino-acid polypeptide reads, in one-letter code: Kinesin-related protein 8 (1873 aa).

A Kinesin motor domain is found at cysteine 13 to isoleucine 413. Residue glycine 93–threonine 100 participates in ATP binding. Disordered stretches follow at residues asparagine 231 to asparagine 302, valine 463 to serine 567, leucine 778 to aspartate 797, lysine 841 to threonine 891, lysine 930 to leucine 1008, proline 1179 to serine 1207, leucine 1244 to serine 1267, threonine 1328 to serine 1360, and asparagine 1403 to aspartate 1467. Low complexity predominate over residues serine 232 to serine 247. The segment covering isoleucine 280–serine 297 has biased composition (acidic residues). Positions threonine 473 to serine 567 are enriched in low complexity. Residues phenylalanine 715 to valine 933 adopt a coiled-coil conformation. Composition is skewed to low complexity over residues isoleucine 937–threonine 1005, leucine 1182–glutamine 1200, leucine 1244–glutamine 1254, asparagine 1348–asparagine 1358, and serine 1423–asparagine 1454. 5 WD repeats span residues glycine 1506 to aspartate 1546, serine 1548 to leucine 1587, isoleucine 1589 to lysine 1628, histidine 1636 to lysine 1673, and proline 1677 to asparagine 1714. A disordered region spans residues asparagine 1758 to serine 1780. WD repeat units follow at residues alanine 1805 to leucine 1842 and glycine 1844 to cysteine 1873.

It belongs to the TRAFAC class myosin-kinesin ATPase superfamily. Kinesin family.

The protein localises to the cytoplasm. It localises to the cytoskeleton. In terms of biological role, microtubule-associated force-producing protein that plays a role in organelle transport. Its motor activity is directed toward the microtubule's plus end. Cooperates with kif10 and dynein to organize interphase microtubules. In Dictyostelium discoideum (Social amoeba), this protein is Kinesin-related protein 8 (kif8).